Here is a 592-residue protein sequence, read N- to C-terminus: Aspartate--tRNA(Asp/Asn) ligase (592 aa).

L-aspartate is bound at residue glutamate 172. An aspartate region spans residues 196-199 (QLFK). L-aspartate is bound at residue arginine 218. ATP is bound by residues 218–220 (RDE) and glutamine 227. Residue histidine 442 participates in L-aspartate binding. Residue glutamate 476 coordinates ATP. Residue arginine 483 participates in L-aspartate binding. 528–531 (GWDR) is an ATP binding site. Positions 553–592 (SGTDPLTGAPTPITPEQRKEAGIDADPYAAAGRPPGRQSA) are disordered.

The protein belongs to the class-II aminoacyl-tRNA synthetase family. Type 1 subfamily. Homodimer.

It is found in the cytoplasm. The enzyme catalyses tRNA(Asx) + L-aspartate + ATP = L-aspartyl-tRNA(Asx) + AMP + diphosphate. Aspartyl-tRNA synthetase with relaxed tRNA specificity since it is able to aspartylate not only its cognate tRNA(Asp) but also tRNA(Asn). Reaction proceeds in two steps: L-aspartate is first activated by ATP to form Asp-AMP and then transferred to the acceptor end of tRNA(Asp/Asn). The protein is Aspartate--tRNA(Asp/Asn) ligase of Acidothermus cellulolyticus (strain ATCC 43068 / DSM 8971 / 11B).